A 309-amino-acid chain; its full sequence is HPr kinase/phosphorylase (309 aa).

Catalysis depends on residues His138 and Lys159. Residue 153–160 (GQSGVGKS) coordinates ATP. Ser160 contacts Mg(2+). Asp177 functions as the Proton acceptor; for phosphorylation activity. Proton donor; for dephosphorylation activity in the catalytic mechanism. The important for the catalytic mechanism of both phosphorylation and dephosphorylation stretch occupies residues 201 to 210 (LEIRGLGIIN). Glu202 contributes to the Mg(2+) binding site. Arg243 is an active-site residue. Residues 264 to 269 (PVRPGR) are important for the catalytic mechanism of dephosphorylation.

This sequence belongs to the HPrK/P family. Homohexamer. Mg(2+) is required as a cofactor.

The enzyme catalyses [HPr protein]-L-serine + ATP = [HPr protein]-O-phospho-L-serine + ADP + H(+). It carries out the reaction [HPr protein]-O-phospho-L-serine + phosphate + H(+) = [HPr protein]-L-serine + diphosphate. Functionally, catalyzes the ATP- as well as the pyrophosphate-dependent phosphorylation of a specific serine residue in HPr, a phosphocarrier protein of the phosphoenolpyruvate-dependent sugar phosphotransferase system (PTS). HprK/P also catalyzes the pyrophosphate-producing, inorganic phosphate-dependent dephosphorylation (phosphorolysis) of seryl-phosphorylated HPr (P-Ser-HPr). The two antagonistic activities of HprK/P are regulated by several intracellular metabolites, which change their concentration in response to the absence or presence of rapidly metabolisable carbon sources (glucose, fructose, etc.) in the growth medium. Also phosphorylates/dephosphorylates the HPr-like catabolite repression protein crh on a specific serine residue. Therefore, by controlling the phosphorylation state of HPr and crh, HPrK/P is a sensor enzyme that plays a major role in the regulation of carbon metabolism and sugar transport: it mediates carbon catabolite repression (CCR), and regulates PTS-catalyzed carbohydrate uptake and inducer exclusion. The sequence is that of HPr kinase/phosphorylase from Bacillus cereus (strain AH820).